A 143-amino-acid chain; its full sequence is Sorting nexin-3 (143 aa).

The PX domain maps to 23–140; the sequence is NILEIDVINP…SSFLQSPEFK (118 aa). 5 residues coordinate a 1,2-diacyl-sn-glycero-3-phospho-(1D-myo-inositol-3-phosphate): arginine 66, serine 68, lysine 92, arginine 97, and arginine 106.

The protein belongs to the sorting nexin family.

The protein localises to the cytoplasm. It localises to the golgi apparatus membrane. Its subcellular location is the prevacuolar compartment membrane. In terms of biological role, required for retention of late Golgi membrane proteins. Component of the retrieval machinery that functions by direct interaction with the cytosolic tails of certain TGN membrane proteins during the sorting/budding process at the prevacuolar compartment. Binds phosphatidylinositol 3-phosphate (PtdIns(P3)). This is Sorting nexin-3 (snx3) from Schizosaccharomyces pombe (strain 972 / ATCC 24843) (Fission yeast).